The following is a 182-amino-acid chain: Ribulose bisphosphate carboxylase small subunit, chloroplastic 4 (182 aa).

A chloroplast-targeting transit peptide spans 1–41 (MAATMMNKTVVLSKGCTKPSAVPKVSINRKGFLNTAMNKKR).

This sequence belongs to the RuBisCO small chain family. In terms of assembly, heterohexadecamer of 8 large and 8 small subunits.

Its subcellular location is the plastid. It localises to the chloroplast. Functionally, ruBisCO catalyzes two reactions: the carboxylation of D-ribulose 1,5-bisphosphate, the primary event in carbon dioxide fixation, as well as the oxidative fragmentation of the pentose substrate. Both reactions occur simultaneously and in competition at the same active site. Although the small subunit is not catalytic it is essential for maximal activity. The protein is Ribulose bisphosphate carboxylase small subunit, chloroplastic 4 of Acetabularia peniculus (Green alga).